A 163-amino-acid chain; its full sequence is Large ribosomal subunit protein uL15 (163 aa).

A compositionally biased stretch (basic residues) spans 1 to 29 (MSKKRRQRGSRTHGGGSHKNRRGAGHRGG). Disordered stretches follow at residues 1 to 59 (MSKK…KTRR) and 135 to 163 (VADG…DEES). Composition is skewed to basic and acidic residues over residues 33 to 46 (AGRD…HEPL) and 142 to 154 (LSER…AEKD).

The protein belongs to the universal ribosomal protein uL15 family. Part of the 50S ribosomal subunit.

Functionally, binds to the 23S rRNA. The polypeptide is Large ribosomal subunit protein uL15 (Natronomonas pharaonis (strain ATCC 35678 / DSM 2160 / CIP 103997 / JCM 8858 / NBRC 14720 / NCIMB 2260 / Gabara) (Halobacterium pharaonis)).